The primary structure comprises 286 residues: MTDAAGRVEPSGVWATAVGVARVRAMETAREQPLFRDPLALAFATAGGRGPGTLSPPRADEAARRRWLEVALSIVIRTKFLDDLLNRAVASGVRQVVLLGAGMDSRAFRMDWPTGTRLFEVDTAEPLGFKASVLRQERAVARCERITVPVDLREDWPGALAAAGHDPAQPTVWIAEGLLIYLPADAVQSLLERVGALSAAGSRMGLTLGTRGVVERFRGDAAAGSAASMWVSEMPEDPVGWLDGLGWQAETFTLRDRAAAYGRPLLTPSQQDEGTGALVSAVRTAH.

S-adenosyl-L-methionine contacts are provided by residues aspartate 122 and 151-152; that span reads DL.

The protein belongs to the UPF0677 family.

In terms of biological role, exhibits S-adenosyl-L-methionine-dependent methyltransferase activity. The chain is Putative S-adenosyl-L-methionine-dependent methyltransferase FRAAL3718 from Frankia alni (strain DSM 45986 / CECT 9034 / ACN14a).